The primary structure comprises 254 residues: MLAKRIIPCLDVTGGRVVKGVNFVNLRDAGDPVELADRYNLDGADELVFLDITASSDARDIMADVVARTARKVFIPLAVGGGIRSIADARHILLSGADKVSVNTAAVRRPELITELSRELGAQAVVLAIDARRHGPGGWHVYTRGGRDDEGMDAVAWAARGEALGAGEVLLTSMDTDGVQDGFDCALTMAVSRATHIPVIASGGAGKPEHFVRVLTDGCADAALAASIFHYGTYTVNQLKEALDKRGIPVRVTA.

Catalysis depends on residues Asp11 and Asp130.

It belongs to the HisA/HisF family. In terms of assembly, heterodimer of HisH and HisF.

It is found in the cytoplasm. The catalysed reaction is 5-[(5-phospho-1-deoxy-D-ribulos-1-ylimino)methylamino]-1-(5-phospho-beta-D-ribosyl)imidazole-4-carboxamide + L-glutamine = D-erythro-1-(imidazol-4-yl)glycerol 3-phosphate + 5-amino-1-(5-phospho-beta-D-ribosyl)imidazole-4-carboxamide + L-glutamate + H(+). The protein operates within amino-acid biosynthesis; L-histidine biosynthesis; L-histidine from 5-phospho-alpha-D-ribose 1-diphosphate: step 5/9. In terms of biological role, IGPS catalyzes the conversion of PRFAR and glutamine to IGP, AICAR and glutamate. The HisF subunit catalyzes the cyclization activity that produces IGP and AICAR from PRFAR using the ammonia provided by the HisH subunit. The sequence is that of Imidazole glycerol phosphate synthase subunit HisF from Solibacter usitatus (strain Ellin6076).